A 316-amino-acid polypeptide reads, in one-letter code: 1-aminocyclopropane-1-carboxylate oxidase 4 (316 aa).

Residues 153–253 (PNFGTKVSNY…RMSLASFYNP (101 aa)) form the Fe2OG dioxygenase domain. Positions 177, 179, and 234 each coordinate Fe cation.

Belongs to the iron/ascorbate-dependent oxidoreductase family. Fe cation is required as a cofactor. In terms of tissue distribution, expressed in all of the floral organs examined apart from the sepals.

The enzyme catalyses 1-aminocyclopropane-1-carboxylate + L-ascorbate + O2 = ethene + L-dehydroascorbate + hydrogen cyanide + CO2 + 2 H2O. It functions in the pathway alkene biosynthesis; ethylene biosynthesis via S-adenosyl-L-methionine; ethylene from S-adenosyl-L-methionine: step 2/2. This chain is 1-aminocyclopropane-1-carboxylate oxidase 4 (ACO4), found in Solanum lycopersicum (Tomato).